The following is a 97-amino-acid chain: Ferredoxin-thioredoxin reductase, variable chain (97 aa).

The protein belongs to the ferredoxin thioredoxin reductase alpha subunit family. In terms of assembly, heterodimer of subunit A (variable subunit) and subunit B (catalytic subunit). Heterodimeric FTR forms a complex with ferredoxin and thioredoxin.

The protein resides in the plastid. The protein localises to the chloroplast. Functionally, variable subunit of the ferredoxin-thioredoxin reductase (FTR), which catalyzes the two-electron reduction of thioredoxins by the electrons provided by reduced ferredoxin. This Zea mays (Maize) protein is Ferredoxin-thioredoxin reductase, variable chain.